A 134-amino-acid chain; its full sequence is MIFGVGVDIVEIRRIKEAIEKHNTFIDRIFSKNEIEYLKNRNLRPEFVAGRFAAKEAVVKSLGSGFRGFDFKDIEIDRTASGRPTVVLKGKAKLMANKYGNYKIHLSISHGVDNAIAYAIMEVDKIEDSDCKDI.

Mg(2+)-binding residues include Asp-8 and Glu-56.

It belongs to the P-Pant transferase superfamily. AcpS family. Requires Mg(2+) as cofactor.

Its subcellular location is the cytoplasm. The enzyme catalyses apo-[ACP] + CoA = holo-[ACP] + adenosine 3',5'-bisphosphate + H(+). Its function is as follows. Transfers the 4'-phosphopantetheine moiety from coenzyme A to a Ser of acyl-carrier-protein. In Clostridium kluyveri (strain ATCC 8527 / DSM 555 / NBRC 12016 / NCIMB 10680 / K1), this protein is Holo-[acyl-carrier-protein] synthase.